The following is a 208-amino-acid chain: ATP phosphoribosyltransferase (208 aa).

This sequence belongs to the ATP phosphoribosyltransferase family. Short subfamily. As to quaternary structure, heteromultimer composed of HisG and HisZ subunits.

It is found in the cytoplasm. The enzyme catalyses 1-(5-phospho-beta-D-ribosyl)-ATP + diphosphate = 5-phospho-alpha-D-ribose 1-diphosphate + ATP. Its pathway is amino-acid biosynthesis; L-histidine biosynthesis; L-histidine from 5-phospho-alpha-D-ribose 1-diphosphate: step 1/9. Its function is as follows. Catalyzes the condensation of ATP and 5-phosphoribose 1-diphosphate to form N'-(5'-phosphoribosyl)-ATP (PR-ATP). Has a crucial role in the pathway because the rate of histidine biosynthesis seems to be controlled primarily by regulation of HisG enzymatic activity. In Lactococcus lactis subsp. cremoris (strain MG1363), this protein is ATP phosphoribosyltransferase.